Reading from the N-terminus, the 586-residue chain is Thioredoxin domain-containing protein 3 (586 aa).

Positions 10 to 116 (LQSVVNSQNL…NRKVITLIDE (107 aa)) constitute a Thioredoxin domain. A disulfide bridge connects residues cysteine 39 and cysteine 42. NDK stretches follow at residues 157–254 (MAII…VLEE), 312–452 (VQTT…STLA), and 453–586 (LIKP…NPEN).

In the C-terminal section; belongs to the NDK family. Monomer. In terms of tissue distribution, testis-specific. Expressed mainly in round spermatids.

Its subcellular location is the cytoplasm. In terms of biological role, probably required during the final stages of sperm tail maturation in the testis and/or epididymis, where extensive disulfide bonding of fibrous sheath (FS) proteins occurs. In vitro, it has neither nucleoside diphosphate kinase (NDPK) activity nor reducing activity on disulfide bonds. Exhibits a 3'-5' exonuclease activity with a preference for single-stranded DNA, suggesting roles in DNA proofreading and repair. This chain is Thioredoxin domain-containing protein 3 (Nme8), found in Mus musculus (Mouse).